The primary structure comprises 243 residues: DNA repair protein RecO (243 aa).

It belongs to the RecO family.

In terms of biological role, involved in DNA repair and RecF pathway recombination. The polypeptide is DNA repair protein RecO (Vibrio parahaemolyticus serotype O3:K6 (strain RIMD 2210633)).